The primary structure comprises 346 residues: Nicotinate-nucleotide--dimethylbenzimidazole phosphoribosyltransferase (346 aa).

The Proton acceptor role is filled by Glu313.

Belongs to the CobT family.

It carries out the reaction 5,6-dimethylbenzimidazole + nicotinate beta-D-ribonucleotide = alpha-ribazole 5'-phosphate + nicotinate + H(+). Its pathway is nucleoside biosynthesis; alpha-ribazole biosynthesis; alpha-ribazole from 5,6-dimethylbenzimidazole: step 1/2. In terms of biological role, catalyzes the synthesis of alpha-ribazole-5'-phosphate from nicotinate mononucleotide (NAMN) and 5,6-dimethylbenzimidazole (DMB). In Parabacteroides distasonis (strain ATCC 8503 / DSM 20701 / CIP 104284 / JCM 5825 / NCTC 11152), this protein is Nicotinate-nucleotide--dimethylbenzimidazole phosphoribosyltransferase.